Here is a 270-residue protein sequence, read N- to C-terminus: MSRIALGLAYDGSAWQGWQTQPHGVTVQDQVEAALASFAGGGGPVATVCAGRTDTGVHAAMQVIHLDTDLQRRDESWVRGVNAFLPPSIVVQWARPVSEAFHARFSARSRTYVYLLWRGRVRPALWAGRAGWAFQPLDVPAMRAAARTLLGEHDFSSFRSSQCQARHPVRTLHRLDIDERGAFLVFTLRANAFLHHMVRNLIGALLQVGQGRESVAWMDALLRARDRRLGAPTFMPDGLYLSAIEYPAEFGFDELDGGTMLLSPFTGALG.

Aspartate 54 functions as the Nucleophile in the catalytic mechanism. A substrate-binding site is contributed by tyrosine 112.

It belongs to the tRNA pseudouridine synthase TruA family. Homodimer.

The enzyme catalyses uridine(38/39/40) in tRNA = pseudouridine(38/39/40) in tRNA. Formation of pseudouridine at positions 38, 39 and 40 in the anticodon stem and loop of transfer RNAs. The chain is tRNA pseudouridine synthase A from Bordetella bronchiseptica (strain ATCC BAA-588 / NCTC 13252 / RB50) (Alcaligenes bronchisepticus).